The primary structure comprises 421 residues: 3-isopropylmalate dehydratase large subunit (421 aa).

3 residues coordinate [4Fe-4S] cluster: C302, C362, and C365.

Belongs to the aconitase/IPM isomerase family. LeuC type 2 subfamily. Heterodimer of LeuC and LeuD. [4Fe-4S] cluster is required as a cofactor.

The enzyme catalyses (2R,3S)-3-isopropylmalate = (2S)-2-isopropylmalate. It functions in the pathway amino-acid biosynthesis; L-leucine biosynthesis; L-leucine from 3-methyl-2-oxobutanoate: step 2/4. Functionally, catalyzes the isomerization between 2-isopropylmalate and 3-isopropylmalate, via the formation of 2-isopropylmaleate. This chain is 3-isopropylmalate dehydratase large subunit, found in Campylobacter fetus subsp. fetus (strain 82-40).